The primary structure comprises 164 residues: Lectin (164 aa).

The N-terminal stretch at 1–15 is a signal peptide; the sequence is TVATILTILASTCMA. A Bulb-type lectin domain is found at 16–125; sequence RNVLVNNEGL…DIWSTGTYRK (110 aa). Residues Cys-44 and Cys-68 are joined by a disulfide bond.

As to quaternary structure, homotetramer. Not glycosylated.

Its function is as follows. Mannose-specific lectin. Induces a Th1-type immune response in vitro. Causes a 4-fold increase in the proliferation of murine thymocytes and a significant increase in the production of nitric oxide at 24 hours in a macrophage cell line. Stimulates the production of the pro-inflammatory cytokines TNF and IL12 by rat peritoneal macrophages in a dose-dependent manner and of the cytokines IFNG and IL2 in murine thymocytes. Has hemagglutination activity towards rabbit erythrocytes. The protein is Lectin of Allium cepa (Onion).